Consider the following 164-residue polypeptide: Peptide deformylase (164 aa).

2 residues coordinate Fe cation: C87 and H129. The active site involves E130. H133 is a binding site for Fe cation.

The protein belongs to the polypeptide deformylase family. Fe(2+) serves as cofactor.

It catalyses the reaction N-terminal N-formyl-L-methionyl-[peptide] + H2O = N-terminal L-methionyl-[peptide] + formate. In terms of biological role, removes the formyl group from the N-terminal Met of newly synthesized proteins. Requires at least a dipeptide for an efficient rate of reaction. N-terminal L-methionine is a prerequisite for activity but the enzyme has broad specificity at other positions. This is Peptide deformylase from Thermotoga sp. (strain RQ2).